We begin with the raw amino-acid sequence, 273 residues long: Dermonecrotic toxin LsaSicTox-alphaIB1ai (273 aa).

His5 is an active-site residue. Mg(2+) contacts are provided by Glu25 and Asp27. His41 (nucleophile) is an active-site residue. 2 disulfide bridges follow: Cys45–Cys51 and Cys47–Cys190. Asp85 is a Mg(2+) binding site.

Belongs to the arthropod phospholipase D family. Class II subfamily. Requires Mg(2+) as cofactor. As to expression, expressed by the venom gland.

It is found in the secreted. It carries out the reaction an N-(acyl)-sphingosylphosphocholine = an N-(acyl)-sphingosyl-1,3-cyclic phosphate + choline. The catalysed reaction is an N-(acyl)-sphingosylphosphoethanolamine = an N-(acyl)-sphingosyl-1,3-cyclic phosphate + ethanolamine. It catalyses the reaction a 1-acyl-sn-glycero-3-phosphocholine = a 1-acyl-sn-glycero-2,3-cyclic phosphate + choline. The enzyme catalyses a 1-acyl-sn-glycero-3-phosphoethanolamine = a 1-acyl-sn-glycero-2,3-cyclic phosphate + ethanolamine. Dermonecrotic toxins cleave the phosphodiester linkage between the phosphate and headgroup of certain phospholipids (sphingolipid and lysolipid substrates), forming an alcohol (often choline) and a cyclic phosphate. This toxin acts on sphingomyelin (SM). It may also act on ceramide phosphoethanolamine (CPE), lysophosphatidylcholine (LPC) and lysophosphatidylethanolamine (LPE), but not on lysophosphatidylserine (LPS), and lysophosphatidylglycerol (LPG). It acts by transphosphatidylation, releasing exclusively cyclic phosphate products as second products. Induces dermonecrosis, hemolysis, increased vascular permeability, edema, inflammatory response, and platelet aggregation. The sequence is that of Dermonecrotic toxin LsaSicTox-alphaIB1ai from Loxosceles sabina (Tucson recluse spider).